We begin with the raw amino-acid sequence, 32 residues long: Calcitonin (32 aa).

Cys-1 and Cys-7 are oxidised to a cystine. Pro-32 carries the proline amide modification.

The protein belongs to the calcitonin family.

The protein resides in the secreted. In terms of biological role, calcitonin is a peptide hormone that causes a rapid but short-lived drop in the level of calcium and phosphate in blood by promoting the incorporation of those ions in the bones. Calcitonin function is mediated by the calcitonin receptor/CALCR and the CALCR-RAMP2 (AMYR2) receptor complex. The protein is Calcitonin (CALCA) of Sus scrofa (Pig).